Reading from the N-terminus, the 147-residue chain is MTRDQVTQLVLDSKRRKQLKWAQLAEATGQSKEWTAAALLGQMTLSAAQAGAVGRLLDLPADAVDGLQVVPYKGSLPTAVPTDPLIYRFYELINVYGTSIKELIHEEFGDGIMSAIDFSMDISREADPKGDRVRIVLNGKFLPYRMY.

Catalysis depends on residues Arg-88, Glu-91, and Ser-114.

Belongs to the cyanase family.

It catalyses the reaction cyanate + hydrogencarbonate + 3 H(+) = NH4(+) + 2 CO2. Functionally, catalyzes the reaction of cyanate with bicarbonate to produce ammonia and carbon dioxide. In Thiobacillus denitrificans (strain ATCC 25259 / T1), this protein is Cyanate hydratase.